Consider the following 211-residue polypeptide: Claudin-7 (211 aa).

The Cytoplasmic portion of the chain corresponds to Met1–Gln7. A helical membrane pass occupies residues Leu8–Pro28. Topologically, residues Gln29 to Arg81 are extracellular. A helical membrane pass occupies residues Ala82 to Met102. Residues Lys103–Ala119 are Cytoplasmic-facing. The helical transmembrane segment at Met120–Ile140 threads the bilayer. At Gly141 to Glu160 the chain is on the extracellular side. Residues Phe161–Leu181 traverse the membrane as a helical segment. Over Leu182–Val211 the chain is Cytoplasmic. Positions Tyr210–Val211 are interactions with TJP1, TJP2 and TJP3.

Belongs to the claudin family. Directly interacts with TJP1/ZO-1, TJP2/ZO-2 and TJP3/ZO-3. The phosphorylated form interacts with EPCAM. Post-translationally, phosphorylated. In terms of tissue distribution, expressed predominantly in lung and kidney.

It is found in the cell membrane. Its subcellular location is the basolateral cell membrane. It localises to the cell junction. The protein resides in the tight junction. Functionally, plays a major role in tight junction-specific obliteration of the intercellular space, through calcium-independent cell-adhesion activity. The chain is Claudin-7 (Cldn7) from Mus musculus (Mouse).